We begin with the raw amino-acid sequence, 591 residues long: 5'-nucleotidase domain-containing protein DDB_G0275467 (591 aa).

Composition is skewed to low complexity over residues 38-50 (STTT…SYST) and 68-78 (QHQQQQPQQHQ). A disordered region spans residues 38 to 88 (STTTTSGIKSYSTHNRSNNDTHTSKSNTIDQHQQQQPQQHQNNDNKHLFTP). Asp-165 functions as the Nucleophile in the catalytic mechanism. Mg(2+)-binding residues include Asp-165 and Asp-167. The active-site Proton donor is the Asp-167. 305-313 (TAAVGKVHL) is a binding site for substrate. Asp-450 is a binding site for Mg(2+).

It belongs to the 5'(3')-deoxyribonucleotidase family. Mg(2+) is required as a cofactor.

This chain is 5'-nucleotidase domain-containing protein DDB_G0275467, found in Dictyostelium discoideum (Social amoeba).